The chain runs to 228 residues: DNA mismatch repair protein MutH (228 aa).

The protein belongs to the MutH family.

It is found in the cytoplasm. Its function is as follows. Sequence-specific endonuclease that cleaves unmethylated GATC sequences. It is involved in DNA mismatch repair. The polypeptide is DNA mismatch repair protein MutH (Yersinia pseudotuberculosis serotype IB (strain PB1/+)).